A 423-amino-acid chain; its full sequence is Pleckstrin homology domain-containing family O member 1 (423 aa).

Disordered regions lie at residues 1 to 21, 81 to 100, and 217 to 277; these read MEKN…SAQP, RKSK…AHSR, and LAAG…HSEK. Polar residues predominate over residues 7 to 20; the sequence is AKRGQQDGNQQSAQ. In terms of domain architecture, PH spans 20–131; that stretch reads QPEKVGWVRK…WINALNSAIT (112 aa). Positions 83 to 92 are enriched in basic residues; that stretch reads SKSRSKKNHS. Positions 222 to 259 are enriched in basic and acidic residues; that stretch reads RRSDSENVKLSEKGRSGTLPRHEVTSWDKPTQRKDSLD.

In terms of processing, C-terminal fragments could be released during apoptosis via caspase-3-dependent cleavage.

It localises to the membrane. The protein localises to the nucleus. The protein resides in the cytoplasm. Its function is as follows. Plays a role in the regulation of the actin cytoskeleton through its interactions with actin capping protein (CP). The sequence is that of Pleckstrin homology domain-containing family O member 1 (PLEKHO1) from Gallus gallus (Chicken).